The sequence spans 481 residues: Coniferyl aldehyde dehydrogenase (481 aa).

Residues Glu221 and Cys255 contribute to the active site.

Belongs to the aldehyde dehydrogenase family. In terms of assembly, homodimer.

It carries out the reaction (E)-coniferaldehyde + NADP(+) + H2O = (E)-ferulate + NADPH + 2 H(+). The catalysed reaction is (E)-coniferaldehyde + NAD(+) + H2O = (E)-ferulate + NADH + 2 H(+). Functionally, catalyzes the NAD(+)-dependent oxidation of coniferyl aldehyde to ferulic acid and which is induced during growth with eugenol as the carbon source. This is Coniferyl aldehyde dehydrogenase (calB) from Pseudomonas sp. (strain HR199 / DSM 7063).